The sequence spans 196 residues: uncharacterized protein (196 aa).

2 consecutive CBS domains span residues 10 to 69 (ARRD…NPDE) and 76 to 132 (MSQP…LVAT). Residues 153-187 (IIEGVCDLCETYSEELRFVDGVWVCPECYEDILGR) enclose the ACP-type MB domain. Cys-158, Cys-161, Cys-177, and Cys-180 together coordinate Fe cation. Positions 158, 161, 177, and 180 each coordinate Zn(2+).

This is an uncharacterized protein from Methanopyrus kandleri (strain AV19 / DSM 6324 / JCM 9639 / NBRC 100938).